Here is a 147-residue protein sequence, read N- to C-terminus: Ribonuclease 4 (147 aa).

The signal sequence occupies residues 1–28 (MALQRTHSLLLLLLLTLLGLGLVQPSYG). The residue at position 29 (Gln29) is a Pyrrolidone carboxylic acid. Residues Arg35, His40, Lys68, Asn71, and Thr72 each contribute to the dUMP site. His40 (proton acceptor) is an active-site residue. Intrachain disulfides connect Cys53-Cys109, Cys67-Cys120, Cys85-Cys135, and Cys92-Cys99. His144 acts as the Proton donor in catalysis. Position 145 (Phe145) interacts with dUMP.

It belongs to the pancreatic ribonuclease family.

It is found in the secreted. Cleaves preferentially after uridine bases. Has antimicrobial activity against uropathogenic E.coli (UPEC). Probably contributes to urinary tract sterility. The sequence is that of Ribonuclease 4 (RNASE4) from Pongo abelii (Sumatran orangutan).